The following is a 352-amino-acid chain: Neuronal growth regulator 1 (352 aa).

A signal peptide spans 1-35 (MVPLVRGAGGSHQWLAAVLLGLCCLLPAGRLAAPG). Ig-like C2-type domains lie at 36-132 (GDFP…VHLT), 137-219 (PKIF…KVTV), and 223-311 (PTIQ…LPLN). An intrachain disulfide couples Cys-58 to Cys-116. 2 N-linked (GlcNAc...) asparagine glycosylation sites follow: Asn-71 and Asn-153. 2 disulfide bridges follow: Cys-158/Cys-201 and Cys-243/Cys-295. N-linked (GlcNAc...) asparagine glycosylation is found at Asn-273, Asn-284, Asn-292, and Asn-305. Residue Gly-322 is the site of GPI-anchor amidated glycine attachment. Residues 323–352 (DAEVLFSCWYLVLTLSSLTSIFYLKNIILH) constitute a propeptide, removed in mature form.

The protein belongs to the immunoglobulin superfamily. IgLON family. As to quaternary structure, interacts with CEPU-1 and LAMP. Glycosylated. As to expression, expressed in embryonic retina, telencephalon, tectum, cerebellum and diencephalon (at protein level).

It localises to the cell membrane. Its function is as follows. May be involved in cell-adhesion. May participate in the regulation of neurite outgrowth in the developing brain. The protein is Neuronal growth regulator 1 (NEGR1) of Gallus gallus (Chicken).